Reading from the N-terminus, the 235-residue chain is Non-structural maintenance of chromosomes element 1 homolog (235 aa).

An RING-type; atypical zinc finger spans residues Ile-181 to Leu-225. Thr-185 bears the Phosphothreonine mark.

It belongs to the NSE1 family. In terms of assembly, component of the Smc5-Smc6 complex which consists at least of Smc5, Smc6, Nse1, Nse2, Nse4 and MAGE. Nse1, Nse4 and MAGE probably form a subcomplex that bridges the head domains of the Smc5-Smc6 heterodimer. Interacts with MAGE and Nse4.

Its subcellular location is the nucleus. It carries out the reaction S-ubiquitinyl-[E2 ubiquitin-conjugating enzyme]-L-cysteine + [acceptor protein]-L-lysine = [E2 ubiquitin-conjugating enzyme]-L-cysteine + N(6)-ubiquitinyl-[acceptor protein]-L-lysine.. Functionally, component of the SMC5-SMC6 complex, a complex involved in repair of DNA double-strand breaks by homologous recombination. The complex may promote sister chromatid homologous recombination by recruiting the SMC1-SMC3 cohesin complex to double-strand breaks. The sequence is that of Non-structural maintenance of chromosomes element 1 homolog from Drosophila melanogaster (Fruit fly).